Here is a 110-residue protein sequence, read N- to C-terminus: MEVAAKLSGARISAQKARLVADQIRGKKVGEALNLLAFSSKKAAEIMKKVLESAVANAEHNEGADVDDLKVSTVFVNEGRSLKRIMPRAKGRADRIVKRSCHITVKVADK.

It belongs to the universal ribosomal protein uL22 family. In terms of assembly, part of the 50S ribosomal subunit.

This protein binds specifically to 23S rRNA; its binding is stimulated by other ribosomal proteins, e.g. L4, L17, and L20. It is important during the early stages of 50S assembly. It makes multiple contacts with different domains of the 23S rRNA in the assembled 50S subunit and ribosome. In terms of biological role, the globular domain of the protein is located near the polypeptide exit tunnel on the outside of the subunit, while an extended beta-hairpin is found that lines the wall of the exit tunnel in the center of the 70S ribosome. This is Large ribosomal subunit protein uL22 from Pseudomonas aeruginosa (strain LESB58).